Here is a 121-residue protein sequence, read N- to C-terminus: Small ribosomal subunit protein uS11 (121 aa).

This sequence belongs to the universal ribosomal protein uS11 family. In terms of assembly, part of the 30S ribosomal subunit. Interacts with proteins S7 and S18. Binds to IF-3.

In terms of biological role, located on the platform of the 30S subunit, it bridges several disparate RNA helices of the 16S rRNA. Forms part of the Shine-Dalgarno cleft in the 70S ribosome. This chain is Small ribosomal subunit protein uS11, found in Mycoplasmoides gallisepticum (strain R(low / passage 15 / clone 2)) (Mycoplasma gallisepticum).